The following is a 710-amino-acid chain: Polyribonucleotide nucleotidyltransferase (710 aa).

Mg(2+) is bound by residues aspartate 489 and aspartate 495. In terms of domain architecture, KH spans 556–615; the sequence is PKIDTIKIDVDKIKVVIGKGGETIDKIIAETGVKIDIDDEGNVSIYSSDQAAIDRTKEII. In terms of domain architecture, S1 motif spans 625-693; the sequence is GEVYHAKVIR…EKGRVDASMK (69 aa).

The protein belongs to the polyribonucleotide nucleotidyltransferase family. Requires Mg(2+) as cofactor.

The protein resides in the cytoplasm. The catalysed reaction is RNA(n+1) + phosphate = RNA(n) + a ribonucleoside 5'-diphosphate. In terms of biological role, involved in mRNA degradation. Catalyzes the phosphorolysis of single-stranded polyribonucleotides processively in the 3'- to 5'-direction. The chain is Polyribonucleotide nucleotidyltransferase from Streptococcus pyogenes serotype M3 (strain ATCC BAA-595 / MGAS315).